The primary structure comprises 242 residues: Type III pantothenate kinase (242 aa).

7 to 14 lines the ATP pocket; the sequence is DNSNTRTK. Residues Y88 and 95–98 each bind substrate; that span reads GADR. Catalysis depends on D97, which acts as the Proton acceptor. D117 contacts K(+). T120 lines the ATP pocket. Residue T172 coordinates substrate.

This sequence belongs to the type III pantothenate kinase family. As to quaternary structure, homodimer. The cofactor is NH4(+). Requires K(+) as cofactor.

Its subcellular location is the cytoplasm. It carries out the reaction (R)-pantothenate + ATP = (R)-4'-phosphopantothenate + ADP + H(+). It functions in the pathway cofactor biosynthesis; coenzyme A biosynthesis; CoA from (R)-pantothenate: step 1/5. Catalyzes the phosphorylation of pantothenate (Pan), the first step in CoA biosynthesis. The polypeptide is Type III pantothenate kinase (Akkermansia muciniphila (strain ATCC BAA-835 / DSM 22959 / JCM 33894 / BCRC 81048 / CCUG 64013 / CIP 107961 / Muc)).